A 147-amino-acid polypeptide reads, in one-letter code: Acidic phospholipase A2 S3-24 (147 aa).

A signal peptide spans methionine 1–alanine 19. Residues serine 20 to leucine 27 constitute a propeptide that is removed on maturation. Intrachain disulfides connect cysteine 38–cysteine 99, cysteine 54–cysteine 146, cysteine 56–cysteine 72, cysteine 71–cysteine 127, cysteine 78–cysteine 120, cysteine 88–cysteine 113, and cysteine 106–cysteine 118. Ca(2+) contacts are provided by tyrosine 55, glycine 57, and glycine 59. The active site involves histidine 75. Aspartate 76 is a Ca(2+) binding site. Aspartate 121 is an active-site residue.

It belongs to the phospholipase A2 family. Group I subfamily. D49 sub-subfamily. Requires Ca(2+) as cofactor. As to expression, expressed by the venom gland.

It localises to the secreted. It catalyses the reaction a 1,2-diacyl-sn-glycero-3-phosphocholine + H2O = a 1-acyl-sn-glycero-3-phosphocholine + a fatty acid + H(+). Snake venom phospholipase A2 (PLA2) that inhibits collagen-induced platelet aggregation. PLA2 catalyzes the calcium-dependent hydrolysis of the 2-acyl groups in 3-sn-phosphoglycerides. The protein is Acidic phospholipase A2 S3-24 of Austrelaps superbus (Lowland copperhead snake).